We begin with the raw amino-acid sequence, 452 residues long: UDP-N-acetylmuramoylalanine--D-glutamate ligase (452 aa).

ATP is bound at residue 119 to 125; that stretch reads GSNGKTT.

It belongs to the MurCDEF family.

Its subcellular location is the cytoplasm. The enzyme catalyses UDP-N-acetyl-alpha-D-muramoyl-L-alanine + D-glutamate + ATP = UDP-N-acetyl-alpha-D-muramoyl-L-alanyl-D-glutamate + ADP + phosphate + H(+). It participates in cell wall biogenesis; peptidoglycan biosynthesis. Functionally, cell wall formation. Catalyzes the addition of glutamate to the nucleotide precursor UDP-N-acetylmuramoyl-L-alanine (UMA). This Streptococcus pyogenes serotype M2 (strain MGAS10270) protein is UDP-N-acetylmuramoylalanine--D-glutamate ligase.